Consider the following 504-residue polypeptide: Maturase K (504 aa).

The protein belongs to the intron maturase 2 family. MatK subfamily.

It is found in the plastid. Its subcellular location is the chloroplast. Functionally, usually encoded in the trnK tRNA gene intron. Probably assists in splicing its own and other chloroplast group II introns. This Adansonia digitata (Baobab tree) protein is Maturase K.